The primary structure comprises 151 residues: Large ribosomal subunit protein bL9 (151 aa).

It belongs to the bacterial ribosomal protein bL9 family.

Functionally, binds to the 23S rRNA. The protein is Large ribosomal subunit protein bL9 of Kosmotoga olearia (strain ATCC BAA-1733 / DSM 21960 / TBF 19.5.1).